A 482-amino-acid polypeptide reads, in one-letter code: DNA polymerase II small subunit (482 aa).

It belongs to the DNA polymerase delta/II small subunit family. As to quaternary structure, heterodimer of a large subunit and a small subunit.

The enzyme catalyses DNA(n) + a 2'-deoxyribonucleoside 5'-triphosphate = DNA(n+1) + diphosphate. The catalysed reaction is Exonucleolytic cleavage in the 3'- to 5'-direction to yield nucleoside 5'-phosphates.. In terms of biological role, possesses two activities: a DNA synthesis (polymerase) and an exonucleolytic activity that degrades single-stranded DNA in the 3' to 5' direction. Has a template-primer preference which is characteristic of a replicative DNA polymerase. The chain is DNA polymerase II small subunit (polB) from Methanothermobacter thermautotrophicus (strain ATCC 29096 / DSM 1053 / JCM 10044 / NBRC 100330 / Delta H) (Methanobacterium thermoautotrophicum).